The chain runs to 471 residues: 3-isopropylmalate dehydratase large subunit (471 aa).

Cys-347, Cys-407, and Cys-410 together coordinate [4Fe-4S] cluster.

Belongs to the aconitase/IPM isomerase family. LeuC type 1 subfamily. As to quaternary structure, heterodimer of LeuC and LeuD. It depends on [4Fe-4S] cluster as a cofactor.

The enzyme catalyses (2R,3S)-3-isopropylmalate = (2S)-2-isopropylmalate. Its pathway is amino-acid biosynthesis; L-leucine biosynthesis; L-leucine from 3-methyl-2-oxobutanoate: step 2/4. Its function is as follows. Catalyzes the isomerization between 2-isopropylmalate and 3-isopropylmalate, via the formation of 2-isopropylmaleate. The protein is 3-isopropylmalate dehydratase large subunit of Acaryochloris marina (strain MBIC 11017).